A 1174-amino-acid chain; its full sequence is Carboxylic acid reductase (1174 aa).

AMP contacts are provided by residues His-297, Ser-392, 413–414 (EG), Thr-418, Asp-491, 503–506 (YLDR), Lys-512, and Lys-612. Residues 651-726 (APVLVTVCRA…ALADYVEAAR (76 aa)) enclose the Carrier domain. The residue at position 685 (Ser-685) is an O-(pantetheine 4'-phosphoryl)serine. NADP(+) is bound by residues 787-791 (TGFLG), Arg-814, Arg-824, 854-855 (DK), 880-882 (PAA), 919-920 (TS), Tyr-956, and Lys-960.

This sequence belongs to the ATP-dependent AMP-binding enzyme family. Carboxylic acid reductase subfamily. Pantetheine 4'-phosphate is required as a cofactor.

It catalyses the reaction a carboxylate + ATP + NADPH + H(+) = an aldehyde + AMP + diphosphate + NADP(+). Functionally, catalyzes the ATP- and NADPH-dependent reduction of carboxylic acids to the corresponding aldehydes. Catalyzes the reduction of a wide range of aliphatic fatty acids (C6-C18) into their corresponding aldehydes. Can also reduce benzoate to benzaldehyde. Has a preference for NADPH over NADH as the electron donor. The sequence is that of Carboxylic acid reductase from Mycobacterium marinum (strain ATCC BAA-535 / M).